The chain runs to 939 residues: Valine--tRNA ligase (939 aa).

The 'HIGH' region signature appears at 47–57 (PNVTGILHMGH). A 'KMSKS' region motif is present at residues 563 to 567 (KLSKS). K566 lines the ATP pocket. The stretch at 874 to 939 (EHLAKERVRL…QSILDKLASL (66 aa)) forms a coiled coil.

It belongs to the class-I aminoacyl-tRNA synthetase family. ValS type 1 subfamily. In terms of assembly, monomer.

The protein resides in the cytoplasm. The catalysed reaction is tRNA(Val) + L-valine + ATP = L-valyl-tRNA(Val) + AMP + diphosphate. Catalyzes the attachment of valine to tRNA(Val). As ValRS can inadvertently accommodate and process structurally similar amino acids such as threonine, to avoid such errors, it has a 'posttransfer' editing activity that hydrolyzes mischarged Thr-tRNA(Val) in a tRNA-dependent manner. The sequence is that of Valine--tRNA ligase from Chlamydia trachomatis serovar L2b (strain UCH-1/proctitis).